The following is a 205-amino-acid chain: Dephospho-CoA kinase (205 aa).

Positions lysine 4–lysine 203 constitute a DPCK domain. Position 12–17 (glycine 12–valine 17) interacts with ATP.

This sequence belongs to the CoaE family.

Its subcellular location is the cytoplasm. The enzyme catalyses 3'-dephospho-CoA + ATP = ADP + CoA + H(+). Its pathway is cofactor biosynthesis; coenzyme A biosynthesis; CoA from (R)-pantothenate: step 5/5. Its function is as follows. Catalyzes the phosphorylation of the 3'-hydroxyl group of dephosphocoenzyme A to form coenzyme A. The sequence is that of Dephospho-CoA kinase from Bacteroides fragilis (strain YCH46).